The chain runs to 215 residues: Translation initiation factor 6 (215 aa).

The protein belongs to the eIF-6 family.

Binds to the 50S ribosomal subunit and prevents its association with the 30S ribosomal subunit to form the 70S initiation complex. The chain is Translation initiation factor 6 from Archaeoglobus fulgidus (strain ATCC 49558 / DSM 4304 / JCM 9628 / NBRC 100126 / VC-16).